A 20-amino-acid polypeptide reads, in one-letter code: Mu-conotoxin SIIIB (20 aa).

The residue at position 1 (Gln-1) is a Pyrrolidone carboxylic acid. 3 cysteine pairs are disulfide-bonded: Cys-3–Cys-13, Cys-4–Cys-19, and Cys-8–Cys-20. Residue Cys-20 is modified to Cysteine amide.

As to expression, expressed by the venom duct.

The protein resides in the secreted. Its function is as follows. Mu-conotoxins block voltage-gated sodium channels (VGSC). Potently displaces (125)I-TIIIA from native rat brain Nav1.2/SCN2A (IC(50) is 5 nM) and muscle Nav1.4/SCN4A (IC(50) is 3 nM) VGSCs. Potently and irreversibly inhibits current through Xenopus oocyte-expressed Nav1.2/SCN2A and Nav1.4/SCN4A. This chain is Mu-conotoxin SIIIB, found in Conus striatus (Striated cone).